We begin with the raw amino-acid sequence, 208 residues long: MLKKPIIIGVTGGSGGGKTSVSRAILNSFPNARIAMIQHDSYYKDQSHISFEERVKTNYDHPLAFDTDFMIQQLKELLAGRPVDIPIYDYKEHTRSNRTFRQEPQDVIIVEGILVLEDERLRELMDIKLFVDTDDDIRIIRRIQRDMVERGRSLESIIEQYTSVVKPMYHQFIEPSKRYADIVIPEGVSNVVAIDLINTKIASILGEL.

12–19 (GGSGGGKT) contributes to the ATP binding site.

It belongs to the uridine kinase family.

The protein resides in the cytoplasm. It catalyses the reaction uridine + ATP = UMP + ADP + H(+). The catalysed reaction is cytidine + ATP = CMP + ADP + H(+). It participates in pyrimidine metabolism; CTP biosynthesis via salvage pathway; CTP from cytidine: step 1/3. The protein operates within pyrimidine metabolism; UMP biosynthesis via salvage pathway; UMP from uridine: step 1/1. In Streptococcus equi subsp. equi (strain 4047), this protein is Uridine kinase.